A 111-amino-acid chain; its full sequence is Large ribosomal subunit protein uL22 (111 aa).

This sequence belongs to the universal ribosomal protein uL22 family. Part of the 50S ribosomal subunit.

Functionally, this protein binds specifically to 23S rRNA; its binding is stimulated by other ribosomal proteins, e.g. L4, L17, and L20. It is important during the early stages of 50S assembly. It makes multiple contacts with different domains of the 23S rRNA in the assembled 50S subunit and ribosome. The globular domain of the protein is located near the polypeptide exit tunnel on the outside of the subunit, while an extended beta-hairpin is found that lines the wall of the exit tunnel in the center of the 70S ribosome. The polypeptide is Large ribosomal subunit protein uL22 (Chlamydia caviae (strain ATCC VR-813 / DSM 19441 / 03DC25 / GPIC) (Chlamydophila caviae)).